Here is a 365-residue protein sequence, read N- to C-terminus: tRNA N6-adenosine threonylcarbamoyltransferase (365 aa).

Residues His-119 and His-123 each contribute to the Fe cation site. Substrate is bound by residues 141 to 145, Asp-174, and Gly-187; that span reads LVSGG. A disordered region spans residues 184–203; it reads QPGGPSVEGEARQGDPKRFR. Positions 192–201 are enriched in basic and acidic residues; it reads GEARQGDPKR. Substrate is bound at residue Asn-289. Asp-317 serves as a coordination point for Fe cation. Residues 342-365 are disordered; the sequence is ARPRWPLDQSSPAMLGSGKKGAKA.

The protein belongs to the KAE1 / TsaD family. It depends on Fe(2+) as a cofactor.

It is found in the cytoplasm. The catalysed reaction is L-threonylcarbamoyladenylate + adenosine(37) in tRNA = N(6)-L-threonylcarbamoyladenosine(37) in tRNA + AMP + H(+). In terms of biological role, required for the formation of a threonylcarbamoyl group on adenosine at position 37 (t(6)A37) in tRNAs that read codons beginning with adenine. Is involved in the transfer of the threonylcarbamoyl moiety of threonylcarbamoyl-AMP (TC-AMP) to the N6 group of A37, together with TsaE and TsaB. TsaD likely plays a direct catalytic role in this reaction. This Ruegeria pomeroyi (strain ATCC 700808 / DSM 15171 / DSS-3) (Silicibacter pomeroyi) protein is tRNA N6-adenosine threonylcarbamoyltransferase.